The primary structure comprises 277 residues: UPF0276 protein PP_0992 (277 aa).

This sequence belongs to the UPF0276 family.

The sequence is that of UPF0276 protein PP_0992 from Pseudomonas putida (strain ATCC 47054 / DSM 6125 / CFBP 8728 / NCIMB 11950 / KT2440).